The chain runs to 37 residues: Gene 40 protein (37 aa).

The sequence is that of Gene 40 protein (40) from Mycobacterium phage L5 (Mycobacteriophage L5).